Reading from the N-terminus, the 96-residue chain is DNA/RNA-binding protein Alba (96 aa).

The protein belongs to the histone-like Alba family.

Its subcellular location is the cytoplasm. The protein resides in the chromosome. In terms of biological role, binds double-stranded DNA tightly but without sequence specificity. Involved in DNA compaction. This Methanocella arvoryzae (strain DSM 22066 / NBRC 105507 / MRE50) protein is DNA/RNA-binding protein Alba.